The sequence spans 418 residues: Cyclin-A1 (418 aa).

This sequence belongs to the cyclin family. Cyclin AB subfamily. In terms of assembly, interacts with the CDK1 and the CDK2 protein kinases to form a serine/threonine kinase holoenzyme complex. The cyclin subunit imparts substrate specificity to the complex.

Its subcellular location is the nucleus. May be involved in the control of the cell cycle at the G1/S (start) and G2/M (mitosis) transitions. The polypeptide is Cyclin-A1 (ccna1) (Xenopus laevis (African clawed frog)).